We begin with the raw amino-acid sequence, 282 residues long: Shikimate dehydrogenase (NADP(+)) (282 aa).

Residues 15–17 (SKS) and Thr62 each bind shikimate. The Proton acceptor role is filled by Lys66. Shikimate contacts are provided by Asn87 and Asp103. NADP(+)-binding positions include 127-131 (GAGGA), 151-156 (NRTHTK), and Met220. Tyr222 provides a ligand contact to shikimate. Position 244 (Gly244) interacts with NADP(+).

This sequence belongs to the shikimate dehydrogenase family. Homodimer.

The enzyme catalyses shikimate + NADP(+) = 3-dehydroshikimate + NADPH + H(+). The protein operates within metabolic intermediate biosynthesis; chorismate biosynthesis; chorismate from D-erythrose 4-phosphate and phosphoenolpyruvate: step 4/7. In terms of biological role, involved in the biosynthesis of the chorismate, which leads to the biosynthesis of aromatic amino acids. Catalyzes the reversible NADPH linked reduction of 3-dehydroshikimate (DHSA) to yield shikimate (SA). The polypeptide is Shikimate dehydrogenase (NADP(+)) (Shewanella baltica (strain OS195)).